The primary structure comprises 536 residues: Cytochrome P450 monooxygenase pbrC (536 aa).

The chain crosses the membrane as a helical span at residues 20–39; it reads VMLPALVGFAFLIYQAFFAI. Cys479 contacts heme.

This sequence belongs to the cytochrome P450 family. It depends on heme as a cofactor.

The protein localises to the membrane. It functions in the pathway secondary metabolite biosynthesis; terpenoid biosynthesis. Cytochrome P450 monooxygenase; part of the gene cluster that mediates the biosynthesis of the sesquiterpenoid aspterric acid (AA), an inhibitor of dihydroxy-acid dehydratase (DHAD) effective as an herbicide. PbrC catalyzes the third and last step within the pathway and converts the alpha-epoxy carboxylate intermediate produced by the cytochrome P450 monooxygenase pbrB from (-)daucane into the tricyclic aspterric acid. This is Cytochrome P450 monooxygenase pbrC from Penicillium brasilianum.